Reading from the N-terminus, the 236-residue chain is Octanoyltransferase (236 aa).

One can recognise a BPL/LPL catalytic domain in the interval 36–220; that stretch reads DQVPDTVLLL…HLAAVLGASS (185 aa). Residues 76–83, 150–152, and 163–165 contribute to the substrate site; these read RGGKITWH, AIG, and GFA. C181 serves as the catalytic Acyl-thioester intermediate.

The protein belongs to the LipB family.

It is found in the cytoplasm. It catalyses the reaction octanoyl-[ACP] + L-lysyl-[protein] = N(6)-octanoyl-L-lysyl-[protein] + holo-[ACP] + H(+). Its pathway is protein modification; protein lipoylation via endogenous pathway; protein N(6)-(lipoyl)lysine from octanoyl-[acyl-carrier-protein]: step 1/2. Its function is as follows. Catalyzes the transfer of endogenously produced octanoic acid from octanoyl-acyl-carrier-protein onto the lipoyl domains of lipoate-dependent enzymes. Lipoyl-ACP can also act as a substrate although octanoyl-ACP is likely to be the physiological substrate. In Thermobifida fusca (strain YX), this protein is Octanoyltransferase.